The following is a 176-amino-acid chain: Shikimate kinase (176 aa).

17 to 24 (GMMGVGKS) contributes to the ATP binding site.

This sequence belongs to the shikimate kinase family.

It localises to the cytoplasm. It carries out the reaction shikimate + ATP = 3-phosphoshikimate + ADP + H(+). The protein operates within metabolic intermediate biosynthesis; chorismate biosynthesis; chorismate from D-erythrose 4-phosphate and phosphoenolpyruvate: step 5/7. This chain is Shikimate kinase, found in Zymomonas mobilis subsp. mobilis (strain ATCC 31821 / ZM4 / CP4).